A 310-amino-acid chain; its full sequence is Putative S-adenosyl-L-methionine-dependent methyltransferase MMAR_3534 (310 aa).

S-adenosyl-L-methionine is bound by residues Asp-131 and 160–161; that span reads DL.

Belongs to the UPF0677 family.

Functionally, exhibits S-adenosyl-L-methionine-dependent methyltransferase activity. The chain is Putative S-adenosyl-L-methionine-dependent methyltransferase MMAR_3534 from Mycobacterium marinum (strain ATCC BAA-535 / M).